Consider the following 373-residue polypeptide: Alanine dehydrogenase (373 aa).

R15 and K75 together coordinate substrate. The active-site Proton donor/acceptor is H96. Residues S134, 178 to 179, D198, S220, 239 to 240, 267 to 270, R280, and 299 to 302 each bind NAD(+); these read IV, VL, VAID, and VANI. Residue D270 is the Proton donor/acceptor of the active site.

This sequence belongs to the AlaDH/PNT family. Homohexamer. Trimer of dimer.

It localises to the cytoplasm. The enzyme catalyses L-alanine + NAD(+) + H2O = pyruvate + NH4(+) + NADH + H(+). The protein operates within amino-acid degradation; L-alanine degradation via dehydrogenase pathway; NH(3) and pyruvate from L-alanine: step 1/1. Its function is as follows. Catalyzes the reversible reductive amination of pyruvate to L-alanine. This enzyme is a key factor in the assimilation of L-alanine as an energy source through the tricarboxylic acid cycle. The chain is Alanine dehydrogenase from Methanococcus maripaludis (strain DSM 14266 / JCM 13030 / NBRC 101832 / S2 / LL).